The sequence spans 695 residues: NADPH--cytochrome P450 reductase (695 aa).

Topologically, residues 1–8 (MAQLDTLD) are lumenal. A helical transmembrane segment spans residues 9–31 (LVVLVVLLVGSAAYFTKGTYWAV). Residues 32 to 695 (PKDPYAASGP…SGSYQEDVWS (664 aa)) are Cytoplasmic-facing. In terms of domain architecture, Flavodoxin-like spans 66–221 (CVIFYGSQTG…DFLAWKEPMW (156 aa)). FMN-binding positions include 72-77 (SQTGTA), 123-126 (ATYG), 169-178 (LGNNTYEHYQ), and Asp-204. Residues 277-538 (HNPFIAPIVE…HVRHSNFKLP (262 aa)) enclose the FAD-binding FR-type domain. Arg-296 is a binding site for NADP(+). FAD-binding positions include 451–454 (RYYS), 469–471 (TAV), and 486–489 (GVTT). NADP(+) contacts are provided by residues Thr-552, 614–615 (SR), 620–624 (KVYVQ), and Glu-656. Trp-694 provides a ligand contact to FAD.

The protein belongs to the NADPH--cytochrome P450 reductase family. It in the N-terminal section; belongs to the flavodoxin family. In the C-terminal section; belongs to the flavoprotein pyridine nucleotide cytochrome reductase family. FAD is required as a cofactor. FMN serves as cofactor.

It is found in the endoplasmic reticulum membrane. Its subcellular location is the mitochondrion outer membrane. The protein localises to the cell membrane. It catalyses the reaction 2 oxidized [cytochrome P450] + NADPH = 2 reduced [cytochrome P450] + NADP(+) + H(+). Its function is as follows. This enzyme is required for electron transfer from NADP to cytochrome P450 in microsomes. It can also provide electron transfer to heme oxygenase and cytochrome B5. Involved in ergosterol biosynthesis. This is NADPH--cytochrome P450 reductase from Aspergillus terreus (strain NIH 2624 / FGSC A1156).